Consider the following 475-residue polypeptide: uncharacterized protein (475 aa).

Residues 19 to 39 (LVSAILILSILIWLIITIFFA) traverse the membrane as a helical segment.

It is found in the membrane. This is an uncharacterized protein from Mycoplasma pneumoniae (strain ATCC 29342 / M129 / Subtype 1) (Mycoplasmoides pneumoniae).